The following is a 2435-amino-acid chain: ATP-binding cassette sub-family A member 2 (2435 aa).

N-linked (GlcNAc...) asparagine glycosylation occurs at Asn14. The next 2 helical transmembrane spans lie at 22–42 (PWVLAFEIFIPLVLFFILLGL) and 54–74 (AFYTAAPLTSAGILPVMQSLC). 3 N-linked (GlcNAc...) asparagine glycosylation sites follow: Asn89, Asn168, and Asn173. Gln271 is modified (N5-methylglutamine). N-linked (GlcNAc...) asparagine glycosylation is found at Asn305, Asn368, Asn379, Asn420, Asn432, Asn476, Asn484, Asn494, Asn530, Asn544, Asn590, Asn600, and Asn628. Transmembrane regions (helical) follow at residues 699–719 (FLFVIEHMMPLCMVISWVYSV), 750–770 (VAWFITGFVQLSISVTALTAI), 782–802 (VVIIWLFLAVYAVATIMFCFL), 813–833 (ASACGGIIYFLSYVPYMYVAI), 857–877 (AFGLGSKYFALYEVAGVGIQW), and 893–913 (LLAVTMLMVDAVVYGILTWYI). The ABC transporter 1 domain occupies 990-1221 (VCVDKLTKVY…YGDGYRLTLV (232 aa)). Residue 1024–1031 (GHNGAGKT) participates in ATP binding. Disordered regions lie at residues 1223–1243 (RPAEPGGPQEPGLASSPPGRA) and 1325–1357 (DQSLENSEADVKESRKDVLPGAEGPASGEGHAG). Phosphoserine is present on residues Ser1238, Ser1327, and Ser1331. The segment covering 1333–1342 (ADVKESRKDV) has biased composition (basic and acidic residues). A glycan (N-linked (GlcNAc...) asparagine) is linked at Asn1408. Residues 1456–1476 (ALFSQILLPAFFVCVAMTVAL) traverse the membrane as a helical segment. 3 N-linked (GlcNAc...) asparagine glycosylation sites follow: Asn1496, Asn1549, and Asn1557. Residues 1586 to 1610 (SNFVPPPPSPAPSDSPASPDEDLQA) form a disordered region. Pro residues predominate over residues 1589-1598 (VPPPPSPAPS). Residues Asn1612, Asn1677, and Asn1775 are each glycosylated (N-linked (GlcNAc...) asparagine). Helical transmembrane passes span 1792–1812 (VVIAIFIIVAMSFVPASFVVF), 1841–1861 (VWDMLNYLVPATCCVIILFVF), 1872–1892 (FPAVLSLFLLYGWSITPIMYP), 1905–1925 (VFLIVINLFIGITATVATFLL), and 1991–2011 (GLVAMAVEGVVGFLLTIMCQY). Positions 2050-2285 (VKIENLTKVY…FGDGYMITVR (236 aa)) constitute an ABC transporter 2 domain. N-linked (GlcNAc...) asparagine glycosylation is present at Asn2054. Position 2087–2094 (2087–2094 (GVNGAGKT)) interacts with ATP. A Phosphothreonine modification is found at Thr2412.

The protein belongs to the ABC transporter superfamily. ABCA family. Methylated at Gln-271 by N6AMT1. As to expression, highly expressed in the brain,peripheral blood leukocytes and ovary, whereas lower levels of expression is observed in kidney and liver. Weakly expressed in brain and highly in peripheral blood leukocytes.

The protein resides in the endosome membrane. Its subcellular location is the lysosome membrane. Its function is as follows. Probable lipid transporter that modulates cholesterol sequestration in the late endosome/lysosome by regulating the intracellular sphingolipid metabolism, in turn participates in cholesterol homeostasis. May alter the transbilayer distribution of ceramide in the intraluminal membrane lipid bilayer, favoring its retention in the outer leaflet that results in increased acid ceramidase activity in the late endosome/lysosome, facilitating ceramide deacylation to sphingosine leading to the sequestration of free cholesterol in lysosomes. In addition regulates amyloid-beta production either by activating a signaling pathway that regulates amyloid precursor protein transcription through the modulation of sphingolipid metabolism or through its role in gamma-secretase processing of APP. May play a role in myelin formation. This Homo sapiens (Human) protein is ATP-binding cassette sub-family A member 2.